The following is a 367-amino-acid chain: Heme A synthase (367 aa).

The next 8 helical transmembrane spans lie at 25-45 (ALRLWLGFVLLALFCLVLVGG), 111-131 (LIARGIGVIFALPLLYFWLTG), 139-159 (WPLVGILALGALQGFIGWWMV), 174-194 (LATHLVMACLIFAGCMWIMRG), 210-230 (GLAAAIAVFALFQIYLGALVA), 272-292 (FIHRIGAYTLFALVLINMVIA), 305-325 (AVLLFALVTVQAAIGVATLLM), and 327-347 (VPLHWGLLHQAGALVVFGFAV). Heme is bound at residue His274. His335 is a binding site for heme.

This sequence belongs to the COX15/CtaA family. Type 2 subfamily. As to quaternary structure, interacts with CtaB. It depends on heme b as a cofactor.

The protein localises to the cell membrane. The catalysed reaction is Fe(II)-heme o + 2 A + H2O = Fe(II)-heme a + 2 AH2. It participates in porphyrin-containing compound metabolism; heme A biosynthesis; heme A from heme O: step 1/1. Catalyzes the conversion of heme O to heme A by two successive hydroxylations of the methyl group at C8. The first hydroxylation forms heme I, the second hydroxylation results in an unstable dihydroxymethyl group, which spontaneously dehydrates, resulting in the formyl group of heme A. The sequence is that of Heme A synthase from Rhizobium etli (strain ATCC 51251 / DSM 11541 / JCM 21823 / NBRC 15573 / CFN 42).